Reading from the N-terminus, the 316-residue chain is Chorismate mutase 3, chloroplastic (316 aa).

A chloroplast-targeting transit peptide spans 1 to 47 (MEAKLLKPAFYNSPNLNLTNSSRLISRLSIWNDKSKVGLSSGSLFLR). L-phenylalanine is bound at residue Arg-62. Residues 62 to 316 (RVDESEYLKL…QIEYLLRRLD (255 aa)) enclose the Chorismate mutase domain. L-tyrosine-binding positions include Arg-133 and 194–197 (NCGS). 194–197 (NCGS) contributes to the L-phenylalanine binding site.

Homodimer. As to expression, expressed in roots, stems, cauline leaves, flowers and siliques, and at lower levels in rosette leaves.

It localises to the plastid. It is found in the chloroplast. It carries out the reaction chorismate = prephenate. The protein operates within metabolic intermediate biosynthesis; prephenate biosynthesis; prephenate from chorismate: step 1/1. Allosterically inhibited by tyrosine and phenylalanine. According to another report, seems not to be repressed by tyrosine and phenylalanine. Activated by tryptophan, cysteine and histidine. May play a role in chloroplast biogenesis. This chain is Chorismate mutase 3, chloroplastic, found in Arabidopsis thaliana (Mouse-ear cress).